The following is a 249-amino-acid chain: Proteasome activator complex subunit 1 (249 aa).

The segment at 55–102 (SNLKAPLDIPVPDPVKEKEKEERRKQQEKEDKDEKKKGEDEDKGPPCG) is disordered. Basic and acidic residues predominate over residues 68 to 98 (PVKEKEKEERRKQQEKEDKDEKKKGEDEDKG).

The protein belongs to the PA28 family. Heterodimer of PSME1 and PSME2, which forms a hexameric ring. PSME1 can form homoheptamers.

Functionally, implicated in immunoproteasome assembly and required for efficient antigen processing. The PA28 activator complex enhances the generation of class I binding peptides by altering the cleavage pattern of the proteasome. The polypeptide is Proteasome activator complex subunit 1 (PSME1) (Bos taurus (Bovine)).